A 76-amino-acid polypeptide reads, in one-letter code: uncharacterized protein (76 aa).

This is an uncharacterized protein from Sulfolobus islandicus rod-shaped virus 1 (SIRV-1).